A 292-amino-acid polypeptide reads, in one-letter code: MKTELEEEEEEEWRSVHEVLLIVLPYLHSLFELLSMIRVSRSLRDAIRDETALWTKLVIEPPLSSRLTDDILSEFSSKSAGKLKTLILRQCLMVTNKGLRRVVDANPLITKIIVPGCSGLTPEGIMECVESLSKNNHKLETLHINGVNGFTKQHLSALYTYLSSEGTIDLEVCPKCDEVRMIPSCSRESCNQKQRKCRGCWLCIPRCAECAVCLVGSDTESQEAACGNDDVLCLECWLVLPKCRFCNKPYCTNHSSRRHEIAITDAASRPSFECEACYYRAGTNPYEVDYQI.

Positions 21 to 79 (LIVLPYLHSLFELLSMIRVSRSLRDAIRDETALWTKLVIEPPLSSRLTDDILSEFSSKS) constitute an F-box; degenerate domain.

As to quaternary structure, part of a SCF (ASK-cullin-F-box) protein ligase complex. Interacts with SKP1A/ASK1 and CUL1.

It functions in the pathway protein modification; protein ubiquitination. Component of SCF(ASK-cullin-F-box) E3 ubiquitin ligase complexes, which may mediate the ubiquitination and subsequent proteasomal degradation of target proteins. Required during the endosperm development in embryos. In Arabidopsis thaliana (Mouse-ear cress), this protein is F-box protein SKIP28 (SKIP28).